The chain runs to 233 residues: Protein lin-7 homolog A (233 aa).

The L27 domain occupies 25–80 (LDRDVARAIELLEKLQESGEVPVHKLQSLKKVLQSEFCTAIREVYQYMHETITVNG). A PDZ domain is found at 108-190 (VVELPKTDEG…SVKLVVRYTP (83 aa)).

It belongs to the lin-7 family. As to quaternary structure, forms a complex with CASK and CASKIN1. Component of the brain-specific heterotrimeric complex (LIN-10-LIN-2-LIN-7 complex) composed of at least APBA1, CASK, and LIN7, which associates with the motor protein KIF17 to transport vesicles along microtubules. Can also interact with other modular proteins containing protein-protein interaction domains like PALS1, PALS2, MPP7, DLG1, DLG2 and DLG3 through its L27 domain. Interacts with DLG4, GRIN2B and MARCHF11 as well as CDH1 and CTNNB1, the channels KCNJ12/Kir2.2, KCNJ4/Kir2.3 and probably KCNJ2/Kir2.1 and SLC6A12/BGT-1 via its PDZ domain. The association of LIN7A with cadherin and beta-catenin is calcium-dependent, occurs at synaptic junctions and requires the actin cytoskeleton. Interacts with EGFR, ERBB2, ERBB3 and ERBB4 with both PDZ and KID domains. Associates with KIF17 via APBA1. Interacts with HTR4. Forms a tripartite complex composed of DLG1, MPP7 and LIN7 (LIN7A or LIN7C).

The protein localises to the cell membrane. The protein resides in the basolateral cell membrane. It is found in the cell junction. Its subcellular location is the postsynaptic density membrane. It localises to the tight junction. In terms of biological role, plays a role in establishing and maintaining the asymmetric distribution of channels and receptors at the plasma membrane of polarized cells. Forms membrane-associated multiprotein complexes that may regulate delivery and recycling of proteins to the correct membrane domains. The tripartite complex composed of LIN7 (LIN7A, LIN7B or LIN7C), CASK and APBA1 associates with the motor protein KIF17 to transport vesicles containing N-methyl-D-aspartate (NMDA) receptor subunit NR2B along microtubules. This complex may have the potential to couple synaptic vesicle exocytosis to cell adhesion in brain. Ensures the proper localization of GRIN2B (subunit 2B of the NMDA receptor) to neuronal postsynaptic density and may function in localizing synaptic vesicles at synapses where it is recruited by beta-catenin and cadherin. Required to localize Kir2 channels, GABA transporter (SLC6A12) and EGFR/ERBB1, ERBB2, ERBB3 and ERBB4 to the basolateral membrane of epithelial cells. This is Protein lin-7 homolog A (LIN7A) from Bos taurus (Bovine).